The sequence spans 874 residues: Isopimaradiene synthase, chloroplastic (874 aa).

Positions 1–12 are enriched in polar residues; that stretch reads MALPSSSLSSRI. The tract at residues 1 to 20 is disordered; sequence MALPSSSLSSRIPTGPHPLT. A chloroplast-targeting transit peptide spans 1–37; sequence MALPSSSLSSRIPTGPHPLTHTQCIPHFSTTINAGIS. Mg(2+)-binding residues include Asp-407, Asp-409, Asp-626, Asp-630, Asn-770, and Glu-778. The short motif at 407 to 410 is the DXDD motif element; it reads DIDD. The DDXXD motif signature appears at 626-630; it reads DDLYD.

The protein belongs to the terpene synthase family. Tpsd subfamily. It depends on Mg(2+) as a cofactor. The cofactor is Mn(2+).

It is found in the plastid. It localises to the chloroplast. The catalysed reaction is (+)-copalyl diphosphate = isopimara-8(14),15-diene + diphosphate. The protein operates within terpene metabolism; oleoresin biosynthesis. Its function is as follows. Terpene synthase (TPS) involved in the biosynthesis of diterpene natural products included in conifer oleoresin secretions and volatile emissions; these compounds contribute to biotic and abiotic stress defense against herbivores and pathogens. Catalyzes the conversion of (+)-copalyl diphosphate ((+)-CPP) to isopimaradiene. The polypeptide is Isopimaradiene synthase, chloroplastic (Picea sitchensis (Sitka spruce)).